Consider the following 294-residue polypeptide: Phenylalanine-4-hydroxylase (294 aa).

The interval M1–I20 is disordered. The Fe cation site is built by H129, H134, and E175.

Belongs to the biopterin-dependent aromatic amino acid hydroxylase family. Fe(2+) is required as a cofactor.

It catalyses the reaction (6R)-L-erythro-5,6,7,8-tetrahydrobiopterin + L-phenylalanine + O2 = (4aS,6R)-4a-hydroxy-L-erythro-5,6,7,8-tetrahydrobiopterin + L-tyrosine. Its pathway is amino-acid degradation; L-phenylalanine degradation; acetoacetate and fumarate from L-phenylalanine: step 1/6. This chain is Phenylalanine-4-hydroxylase (phhA), found in Caulobacter vibrioides (strain ATCC 19089 / CIP 103742 / CB 15) (Caulobacter crescentus).